We begin with the raw amino-acid sequence, 102 residues long: Small ribosomal subunit protein uS10 (102 aa).

The protein belongs to the universal ribosomal protein uS10 family. Part of the 30S ribosomal subunit.

Involved in the binding of tRNA to the ribosomes. The polypeptide is Small ribosomal subunit protein uS10 (Streptococcus thermophilus (strain ATCC BAA-491 / LMD-9)).